Reading from the N-terminus, the 232-residue chain is Flagellar L-ring protein (232 aa).

An N-terminal signal peptide occupies residues 1–15 (MKKVLFYVLPFAFFG). C16 carries N-palmitoyl cysteine lipidation. A lipid anchor (S-diacylglycerol cysteine) is attached at C16.

Belongs to the FlgH family. In terms of assembly, the basal body constitutes a major portion of the flagellar organelle and consists of four rings (L,P,S, and M) mounted on a central rod.

It localises to the cell outer membrane. It is found in the bacterial flagellum basal body. Functionally, assembles around the rod to form the L-ring and probably protects the motor/basal body from shearing forces during rotation. The sequence is that of Flagellar L-ring protein from Campylobacter jejuni subsp. jejuni serotype O:6 (strain 81116 / NCTC 11828).